Consider the following 381-residue polypeptide: Erythronate-4-phosphate dehydrogenase (381 aa).

Substrate contacts are provided by Ser-45 and Thr-67. NAD(+) contacts are provided by residues Asp-148, Ala-207 to Arg-209, and Asp-233. Residue Arg-209 is part of the active site. Residue Glu-238 is part of the active site. The Proton donor role is filled by His-255. Gly-258 is a binding site for NAD(+).

It belongs to the D-isomer specific 2-hydroxyacid dehydrogenase family. PdxB subfamily. In terms of assembly, homodimer.

The protein localises to the cytoplasm. The enzyme catalyses 4-phospho-D-erythronate + NAD(+) = (R)-3-hydroxy-2-oxo-4-phosphooxybutanoate + NADH + H(+). The protein operates within cofactor biosynthesis; pyridoxine 5'-phosphate biosynthesis; pyridoxine 5'-phosphate from D-erythrose 4-phosphate: step 2/5. Functionally, catalyzes the oxidation of erythronate-4-phosphate to 3-hydroxy-2-oxo-4-phosphonooxybutanoate. This is Erythronate-4-phosphate dehydrogenase from Idiomarina loihiensis (strain ATCC BAA-735 / DSM 15497 / L2-TR).